The following is a 191-amino-acid chain: Peptidyl-tRNA hydrolase (191 aa).

Tyrosine 14 is a binding site for tRNA. The Proton acceptor role is filled by histidine 19. Residues tyrosine 64, asparagine 66, and asparagine 112 each contribute to the tRNA site.

This sequence belongs to the PTH family. Monomer.

Its subcellular location is the cytoplasm. The catalysed reaction is an N-acyl-L-alpha-aminoacyl-tRNA + H2O = an N-acyl-L-amino acid + a tRNA + H(+). In terms of biological role, hydrolyzes ribosome-free peptidyl-tRNAs (with 1 or more amino acids incorporated), which drop off the ribosome during protein synthesis, or as a result of ribosome stalling. Its function is as follows. Catalyzes the release of premature peptidyl moieties from peptidyl-tRNA molecules trapped in stalled 50S ribosomal subunits, and thus maintains levels of free tRNAs and 50S ribosomes. This is Peptidyl-tRNA hydrolase from Clostridium botulinum (strain Alaska E43 / Type E3).